The sequence spans 249 residues: ATP synthase subunit a, chloroplastic (249 aa).

Transmembrane regions (helical) follow at residues 40 to 60 (QVLI…VLAI), 97 to 117 (VPFI…GALL), 136 to 156 (INTT…AGLS), 201 to 221 (LVVV…VMFL), and 222 to 242 (GLFT…AYIG).

It belongs to the ATPase A chain family. In terms of assembly, F-type ATPases have 2 components, CF(1) - the catalytic core - and CF(0) - the membrane proton channel. CF(1) has five subunits: alpha(3), beta(3), gamma(1), delta(1), epsilon(1). CF(0) has four main subunits: a, b, b' and c.

It localises to the plastid. It is found in the chloroplast thylakoid membrane. Its function is as follows. Key component of the proton channel; it plays a direct role in the translocation of protons across the membrane. This chain is ATP synthase subunit a, chloroplastic, found in Lepidium virginicum (Virginia pepperweed).